A 678-amino-acid chain; its full sequence is DNA ligase (678 aa).

NAD(+) is bound by residues 35–39, 84–85, and glutamate 116; these read DSVYD and SL. Lysine 118 serves as the catalytic N6-AMP-lysine intermediate. NAD(+)-binding residues include arginine 139, glutamate 178, lysine 297, and lysine 321. Zn(2+) is bound by residues cysteine 415, cysteine 418, cysteine 433, and cysteine 438. Residues 600–678 enclose the BRCT domain; it reads DGNQIFAGKT…EAQLLEMLNE (79 aa).

Belongs to the NAD-dependent DNA ligase family. LigA subfamily. Requires Mg(2+) as cofactor. Mn(2+) is required as a cofactor.

The enzyme catalyses NAD(+) + (deoxyribonucleotide)n-3'-hydroxyl + 5'-phospho-(deoxyribonucleotide)m = (deoxyribonucleotide)n+m + AMP + beta-nicotinamide D-nucleotide.. DNA ligase that catalyzes the formation of phosphodiester linkages between 5'-phosphoryl and 3'-hydroxyl groups in double-stranded DNA using NAD as a coenzyme and as the energy source for the reaction. It is essential for DNA replication and repair of damaged DNA. The protein is DNA ligase of Nostoc punctiforme (strain ATCC 29133 / PCC 73102).